Here is a 58-residue protein sequence, read N- to C-terminus: MSEVKVGKNESLDSALKRFKRSCQKAGVLQDIRKHEHYEKPSIKKKKKSEAARKKKRF.

The interval 28 to 58 (VLQDIRKHEHYEKPSIKKKKKSEAARKKKRF) is disordered. The segment covering 31–42 (DIRKHEHYEKPS) has biased composition (basic and acidic residues). Positions 43-58 (IKKKKKSEAARKKKRF) are enriched in basic residues.

Belongs to the bacterial ribosomal protein bS21 family.

This Syntrophomonas wolfei subsp. wolfei (strain DSM 2245B / Goettingen) protein is Small ribosomal subunit protein bS21.